The chain runs to 390 residues: 23S rRNA (uracil(747)-C(5))-methyltransferase RlmC (390 aa).

[4Fe-4S] cluster contacts are provided by cysteine 12, cysteine 20, cysteine 23, and cysteine 100. Positions 225, 254, 275, and 322 each coordinate S-adenosyl-L-methionine. The Nucleophile role is filled by cysteine 349.

It belongs to the class I-like SAM-binding methyltransferase superfamily. RNA M5U methyltransferase family. RlmC subfamily.

It carries out the reaction uridine(747) in 23S rRNA + S-adenosyl-L-methionine = 5-methyluridine(747) in 23S rRNA + S-adenosyl-L-homocysteine + H(+). Catalyzes the formation of 5-methyl-uridine at position 747 (m5U747) in 23S rRNA. The chain is 23S rRNA (uracil(747)-C(5))-methyltransferase RlmC from Shewanella baltica (strain OS185).